Here is a 296-residue protein sequence, read N- to C-terminus: UDP-N-acetylglucosamine transporter TMEM241 (296 aa).

10 helical membrane passes run 7 to 29 (LVGLTFCTCYLASYLTNKYVLSV), 32 to 52 (FTYPTLFQGWQTLIGGLLLHV), 67 to 87 (SHVLVWLPASVLFVGIIYAGS), 93 to 113 (LAIPVFLTLHNVAEVIICGYQ), 121 to 141 (TSPAKICSALLLLAAAGCLPF), 146 to 166 (FNPDGYFWAIIHLLCVGAYKI), 187 to 207 (IFSVVLLAFASHPTGDLFSVL), 211 to 231 (FLYFYRFHGSCCASGFLGFFL), 250 to 270 (WIFFAKIITAGLSILLFDAIL), and 271 to 291 (TSATTGCLLLGALGEALLVFS).

This sequence belongs to the nucleotide-sugar transporter family. SLC35A subfamily.

It is found in the golgi apparatus. Its subcellular location is the cis-Golgi network membrane. Golgi-localized UDP-N-acetylglucosamine (UDP-GlcNAc) transporter that transports UDP-N-acetylglucosamine into Golgi lumen. Contributes to lysosomal targeting of NPC2, a key protein required for lysosomal cholesterol exiting, and that utilizes the mannose-6-phosphate (M6P) modification pathway for its lysosomal targeting. This chain is UDP-N-acetylglucosamine transporter TMEM241, found in Homo sapiens (Human).